The chain runs to 690 residues: Glycine--tRNA ligase beta subunit (690 aa).

Belongs to the class-II aminoacyl-tRNA synthetase family. Tetramer of two alpha and two beta subunits.

The protein resides in the cytoplasm. The catalysed reaction is tRNA(Gly) + glycine + ATP = glycyl-tRNA(Gly) + AMP + diphosphate. This chain is Glycine--tRNA ligase beta subunit, found in Desulfatibacillum aliphaticivorans.